We begin with the raw amino-acid sequence, 347 residues long: NADH-ubiquinone oxidoreductase chain 2 (347 aa).

A run of 10 helical transmembrane segments spans residues 3–23, 25–45, 66–86, 93–115, 149–169, 178–198, 201–221, 237–257, 274–294, and 325–345; these read PPILIIIMATIMTGTMIVMLS, HWLLIWIGFEMNMLAIIPILM, ASMLLMMGVTINLLYSGQWVI, IASIMMTTALTMKLGLSPFHFWV, INTNLLMLMALTSVLVGGWGG, IMAYSSIAHMGWMAAIITYNP, MILNLTLYILMTLSTFMLFML, FPLITSMILILMLSLGGLPPL, NMIIIPTLMAITALLNLYFYL, and LLPPLIITSTMLLPLTPMLSV.

Belongs to the complex I subunit 2 family. In terms of assembly, core subunit of respiratory chain NADH dehydrogenase (Complex I) which is composed of 45 different subunits. Interacts with TMEM242.

It localises to the mitochondrion inner membrane. The enzyme catalyses a ubiquinone + NADH + 5 H(+)(in) = a ubiquinol + NAD(+) + 4 H(+)(out). In terms of biological role, core subunit of the mitochondrial membrane respiratory chain NADH dehydrogenase (Complex I) which catalyzes electron transfer from NADH through the respiratory chain, using ubiquinone as an electron acceptor. Essential for the catalytic activity and assembly of complex I. The polypeptide is NADH-ubiquinone oxidoreductase chain 2 (Canis lupus (Gray wolf)).